We begin with the raw amino-acid sequence, 605 residues long: Protein cueball (605 aa).

The first 31 residues, 1–31 (MAYIDQKHNTFWDDFAIALRDKIVFLNSTWG), serve as a signal peptide directing secretion. 3 N-linked (GlcNAc...) asparagine glycosylation sites follow: Asn27, Asn64, and Asn85. Over 32–486 (EIHASAHRFE…QCGPAPPVQG (455 aa)) the chain is Extracellular. 4 LDL-receptor class B repeats span residues 53–97 (EMIY…DPLN), 98–145 (RNLF…DICR), 146–190 (RQLY…DQLS), and 191–236 (DRIF…NEDA). 2 N-linked (GlcNAc...) asparagine glycosylation sites follow: Asn261 and Asn314. EGF-like domains lie at 322 to 359 (EGDR…ARCE) and 394 to 431 (EYHK…ERCE). 5 cysteine pairs are disulfide-bonded: Cys334-Cys347, Cys349-Cys358, Cys398-Cys408, Cys402-Cys419, and Cys421-Cys430. Asn433 and Asn464 each carry an N-linked (GlcNAc...) asparagine glycan. The chain crosses the membrane as a helical span at residues 487 to 507 (PLIIVIVLGLVTTSGLVALTV). At 508-605 (HGVRLIYKPK…IHSMEDNLLS (98 aa)) the chain is on the cytoplasmic side.

It belongs to the cueball family.

It is found in the cell membrane. Functionally, has a role in spermatogenesis and oogenesis. This chain is Protein cueball, found in Drosophila grimshawi (Hawaiian fruit fly).